The following is a 484-amino-acid chain: Glycogen synthase (484 aa).

Lysine 15 contacts ADP-alpha-D-glucose.

Belongs to the glycosyltransferase 1 family. Bacterial/plant glycogen synthase subfamily.

It carries out the reaction [(1-&gt;4)-alpha-D-glucosyl](n) + ADP-alpha-D-glucose = [(1-&gt;4)-alpha-D-glucosyl](n+1) + ADP + H(+). It participates in glycan biosynthesis; glycogen biosynthesis. Its function is as follows. Synthesizes alpha-1,4-glucan chains using ADP-glucose. The sequence is that of Glycogen synthase from Geotalea uraniireducens (strain Rf4) (Geobacter uraniireducens).